Consider the following 100-residue polypeptide: Nucleoid-associated protein Rcas_2292 (100 aa).

This sequence belongs to the YbaB/EbfC family. Homodimer.

It is found in the cytoplasm. The protein localises to the nucleoid. In terms of biological role, binds to DNA and alters its conformation. May be involved in regulation of gene expression, nucleoid organization and DNA protection. This chain is Nucleoid-associated protein Rcas_2292, found in Roseiflexus castenholzii (strain DSM 13941 / HLO8).